The primary structure comprises 152 residues: UPF0178 protein Shewmr7_1635 (152 aa).

It belongs to the UPF0178 family.

This is UPF0178 protein Shewmr7_1635 from Shewanella sp. (strain MR-7).